A 192-amino-acid chain; its full sequence is 4'-phosphopantetheinyl transferase AcpT (192 aa).

Belongs to the P-Pant transferase superfamily. Gsp/Sfp/HetI/AcpT family.

The enzyme catalyses apo-[ACP] + CoA = holo-[ACP] + adenosine 3',5'-bisphosphate + H(+). May be involved in an alternative pathway for phosphopantetheinyl transfer and holo-ACP synthesis. The native apo-protein substrate is unknown. This is 4'-phosphopantetheinyl transferase AcpT (acpT) from Salmonella typhi.